The following is a 103-amino-acid chain: MASKLFVLAFLCLALVVVVQSAPQYARGDVPTYDEEDFDEESLKPHSSSSSDDGEEEFDPSLLEEHADAPTARDPGRNPEFLRNSNTDEQASAPAASSSESDE.

Positions 1-21 (MASKLFVLAFLCLALVVVVQS) are cleaved as a signal peptide. Positions 24–103 (QYARGDVPTY…PAASSSESDE (80 aa)) are disordered. Residues 56-68 (EEFDPSLLEEHAD) are blocks exosite I of host thrombin. The segment at 74-77 (DPGR) is blocks active site cleft of host thrombin in a reverse direction compared to substrates. Residues 91-103 (ASAPAASSSESDE) are compositionally biased toward low complexity.

It belongs to the anophelin family. Interacts with human F2 (thrombin); the interaction results in thrombin inhibition. As to expression, female salivary gland (at protein level). Not detected in female midgut, head, carcass and male tissues (at protein level).

It localises to the secreted. With respect to regulation, increasing concentration of NaCl decreases affinity for thrombin. Functionally, salivary protein with anticoagulant activity that inhibits host thrombin (F2); binds to the proteinase in a reverse orientation (opposite to substrates). This chain is Salivary thrombin inhibitor anophelin, found in Anopheles gambiae (African malaria mosquito).